Here is a 458-residue protein sequence, read N- to C-terminus: Retinoic acid receptor RXR-beta (458 aa).

Basic and acidic residues predominate over residues 1–17; the sequence is GEAGRDGMGDTGRDSRS. The disordered stretch occupies residues 1–105; sequence GEAGRDGMGD…GGSGPPEDVK (105 aa). A modulating region spans residues 1–129; that stretch reads GEAGRDGMGD…PGGPGAGKRL (129 aa). Low complexity predominate over residues 18–31; sequence PDSSSPNPLSQGIP. A compositionally biased stretch (pro residues) spans 32–56; that stretch reads PSSPPGPPHTPSAPPPPMPPPPLGS. Residues 57-68 are compositionally biased toward low complexity; the sequence is PFPVISSSMGSP. Residues 69–78 show a composition bias toward pro residues; it reads GLPPPAPPGF. NR C4-type zinc fingers lie at residues 130-150 and 166-190; these read CAICGDRSSGKHYGVYSCEGC and CRDNKDCTVDKRQRNRCQYCRYQKC. Positions 130 to 195 form a DNA-binding region, nuclear receptor; the sequence is CAICGDRSSG…RYQKCLATGM (66 aa). Positions 196 to 220 are hinge; that stretch reads KREAVQEERQRGKDKDGDGDGAGGA. The span at 201–213 shows a compositional bias: basic and acidic residues; that stretch reads QEERQRGKDKDGD. 2 disordered regions span residues 201-223 and 238-261; these read QEERQRGKDKDGDGDGAGGAPEE and QKSDQGVEGPGATGGGGSSPNDPV. The NR LBD domain maps to 221 to 454; sequence PEEMPVDRIL…TFLMEMLEAP (234 aa). Over residues 245–255 the composition is skewed to gly residues; it reads EGPGATGGGGS.

Belongs to the nuclear hormone receptor family. NR2 subfamily. In terms of assembly, homodimer (in vitro). Heterodimer with other retinoic acid receptor family members. Binds DNA preferentially as a RAR/RXR heterodimer. Interacts with NR1H3. Interacts with AKAP13. Expressed in the adrenal gland with main expression in the zona fasciculata (at protein level).

The protein localises to the nucleus. It localises to the cytoplasm. In terms of biological role, receptor for retinoic acid. Retinoic acid receptors bind as heterodimers to their target response elements in response to their ligands, all-trans or 9-cis retinoic acid, and regulate gene expression in various biological processes. The RAR/RXR heterodimers bind to the retinoic acid response elements (RARE). This Rattus norvegicus (Rat) protein is Retinoic acid receptor RXR-beta (Rxrb).